Reading from the N-terminus, the 485-residue chain is Zinc finger protein 639 (485 aa).

Residues Met-1–His-14 are compositionally biased toward basic residues. Disordered stretches follow at residues Met-1–Gly-23 and Asp-54–Arg-80. Residue Ser-60 is modified to Phosphoserine. Lys-76 participates in a covalent cross-link: Glycyl lysine isopeptide (Lys-Gly) (interchain with G-Cter in SUMO2). Ser-88 bears the Phosphoserine mark. The disordered stretch occupies residues Ala-115–Glu-136. Glycyl lysine isopeptide (Lys-Gly) (interchain with G-Cter in SUMO2) cross-links involve residues Lys-177, Lys-181, and Lys-226. C2H2-type zinc fingers lie at residues Tyr-204–His-227, Asn-233–His-255, Tyr-260–His-283, Tyr-289–His-311, Phe-374–His-397, His-403–His-425, Tyr-431–His-454, and His-460–His-482. An interaction with CTNNA2 region spans residues Lys-371 to Ser-455.

The protein belongs to the krueppel C2H2-type zinc-finger protein family. As to quaternary structure, interacts with CTNNA2.

It localises to the nucleus. Binds DNA and may function as a transcriptional repressor. The polypeptide is Zinc finger protein 639 (Znf639) (Mus musculus (Mouse)).